We begin with the raw amino-acid sequence, 284 residues long: 2-dehydro-3-deoxyphosphooctonate aldolase (284 aa).

Belongs to the KdsA family.

The protein resides in the cytoplasm. The enzyme catalyses D-arabinose 5-phosphate + phosphoenolpyruvate + H2O = 3-deoxy-alpha-D-manno-2-octulosonate-8-phosphate + phosphate. It participates in carbohydrate biosynthesis; 3-deoxy-D-manno-octulosonate biosynthesis; 3-deoxy-D-manno-octulosonate from D-ribulose 5-phosphate: step 2/3. It functions in the pathway bacterial outer membrane biogenesis; lipopolysaccharide biosynthesis. This is 2-dehydro-3-deoxyphosphooctonate aldolase from Proteus mirabilis (strain HI4320).